A 759-amino-acid polypeptide reads, in one-letter code: Protein MTSS 1 (759 aa).

The IMD domain occupies 1–254 (MEAVIEKECS…EQVILDLKGS (254 aa)). Positions 108–157 (LQEQMEEWKKVANQLDKDHAKEYKKARQEIKNKSSDTLKLQKKAKKVDAQ) form a coiled coil. A disordered region spans residues 259–309 (SYQTPPSSPSTTMSRKSSVCSSLNSVNSSDSRSSGSHSHSPSSHYRYRSSN). Residue Thr-262 is modified to Phosphothreonine. Residues Ser-265, Ser-266, Ser-275, and Ser-326 each carry the phosphoserine modification. The segment at 331–354 (QDAFQSKSPSPMPPEAANQLSNGF) is disordered. Thr-429 carries the phosphothreonine modification. 2 disordered regions span residues 431–472 (QRRK…AATR) and 569–759 (KRPA…PRFS). Thr-607 is subject to Phosphothreonine. The segment covering 612–627 (PIPIKTPVIPVKTPTV) has biased composition (low complexity). A phosphoserine mark is found at Ser-648 and Ser-651. Positions 660 to 670 (GVSNIPSSLWS) are enriched in polar residues. The segment covering 675-685 (VNPPLPGPKPS) has biased composition (pro residues). The 18-residue stretch at 731–748 (QGEDMLNAIRRGVKLKKT) folds into the WH2 domain.

It belongs to the MTSS family. As to quaternary structure, binds to actin. As to expression, strongly expressed in the developing neurons and skeletal and cardiac muscles in embryos. Strongly expressed also in liver, outer layers of the kidney, and in the Purkinje cells of the brain.

The protein localises to the cytoplasm. It localises to the cytoskeleton. Its function is as follows. Inhibits the nucleation of actin filaments in vitro. This is Protein MTSS 1 from Mus musculus (Mouse).